The chain runs to 540 residues: MAKQLLFEDHARARMLAGVEKLAKAVATTMGPTGRNVIIDKSFGGPTVTKDGVTVAKEIELEDRFENMGAKLVIEVAQKTSDLAGDGTTTATVLARAIFKEGLRNIVAGSNPTAIRRGIEKAVEAACDQLVEMGRPVSGKQEVAHVGAISANNDNVIGELLADALERVGKDGVITVEEGKSRNTEVEYVDGMQFDKGYVSPYFITDSSTMEASLEDALVLLYEKKVSNIRDLVPLLEKTAQTGQPLLIIAEDVDAEALTLLVVNKLRGTLNVCAVKAPGFGDRRKAMLGDIATLTGGTLISEDLGMQLENVTLEHLGRAKKVTVDKSNTTIVEGAGKREDIDKRVAQIRAQIEQTDSDYDKEKFQERLAKLAGGVAVISVGAETEAEMKQTKARLEDALHATRAAVEEGILPGGGVALVHCREAVEAAKKKAKGDEKIGVDIVLGALDAPMRQIADNGGIDGSVVVDEVLQKNDPKIGFNAHTGEYTDMVKAGVIDPVKVVRTALTNAASIAGLLLTTEALVTNFEQEDKDKRPVEGMVS.

ATP-binding positions include 29–32, Lys-50, 86–90, Gly-414, and Asp-496; these read TMGP and DGTTT.

It belongs to the chaperonin (HSP60) family. In terms of assembly, forms a cylinder of 14 subunits composed of two heptameric rings stacked back-to-back. Interacts with the co-chaperonin GroES.

It localises to the cytoplasm. The enzyme catalyses ATP + H2O + a folded polypeptide = ADP + phosphate + an unfolded polypeptide.. Together with its co-chaperonin GroES, plays an essential role in assisting protein folding. The GroEL-GroES system forms a nano-cage that allows encapsulation of the non-native substrate proteins and provides a physical environment optimized to promote and accelerate protein folding. The sequence is that of Chaperonin GroEL 2 from Rhodopirellula baltica (strain DSM 10527 / NCIMB 13988 / SH1).